The following is a 583-amino-acid chain: Membrane-bound O-acyltransferase gup1 (583 aa).

Residues 1 to 52 (MLRLFRFDVLETSTKDTERPNSKSSRLSSTSGSSHPSSSSRLTVRSAVPEKS) lie on the Extracellular side of the membrane. The segment at 15–42 (KDTERPNSKSSRLSSTSGSSHPSSSSRL) is disordered. Positions 22–40 (SKSSRLSSTSGSSHPSSSS) are enriched in low complexity. The helical transmembrane segment at 53–73 (AFGSIEFIFYFSVILSILTIA) threads the bilayer. The Cytoplasmic portion of the chain corresponds to 74–119 (CFKIHYVSSPKHPNYKNIEKYLKPGWLFGQKVDSADFQYSAFRENM). Residues 120 to 140 (PILLLVIIVYNFLWRLVKLVF) traverse the membrane as a helical segment. The Extracellular segment spans residues 141–159 (TKNTNDELAIKNNYRLCFS). The helical transmembrane segment at 160 to 180 (LLFALLVYGTGVIYVLTIALI) threads the bilayer. The Cytoplasmic segment spans residues 181–191 (NYLISKSLKNS). The helical transmembrane segment at 192–212 (IFNPLLTWTLDISVVFFKEYF) threads the bilayer. Topologically, residues 213–298 (AYCKFSSLHP…SCLDEDYNLK (86 aa)) are extracellular. The chain crosses the membrane as a helical span at residues 299–319 (NFLTYIFYAPLYLAGPIISFN). Residues 320-343 (NFMSQMKYPTVSTLKYRNLLYAIR) are Cytoplasmic-facing. A helical transmembrane segment spans residues 344-364 (FLVCVLTMEFLLHYAYVTAIS). The Extracellular portion of the chain corresponds to 365–373 (KDGNWNQYS). The chain crosses the membrane as a helical span at residues 374 to 394 (AVESAMISFIVLFMTWLKLLI). The Cytoplasmic segment spans residues 395 to 444 (PWRLFRLWSLIDDIEPPENIVRCMCNNYSAVGFWRAWHRSFNRWLIRYIY). 2 helical membrane passes run 445–465 (VPLGGSNHSILNLFIIFTFVA) and 466–486 (LWHDISWELFAWGWLIVLFIL). His-468 is an active-site residue. Residues 487–512 (PERLCCFMSRRTGLTKHPYYRYISGF) are Cytoplasmic-facing. A helical membrane pass occupies residues 513 to 533 (GAALNIYFMIICNLIGFAVGI). Residues 534–549 (DGIKNVLVSFFLTLKG) are Extracellular-facing. The helical transmembrane segment at 550-570 (AMSAIAAFIMFFSAVQIMFQI) threads the bilayer. Residues 571–583 (RVNEEEEGINLRC) lie on the Cytoplasmic side of the membrane.

This sequence belongs to the membrane-bound acyltransferase family.

Its subcellular location is the cell membrane. The protein localises to the endoplasmic reticulum membrane. It is found in the mitochondrion membrane. Its function is as follows. Membrane-bound O-acyltransferase involved in the remodeling of glycosylphosphatidylinositol (GPI) anchors. Acts only on GPI-anchored proteins, but not on free GPI lipids. Also involved in lipid metabolism, having profound effects on sphingolipid-sterol-ordered domains integrity and assembly. Involved in cell integrity and apoptosis. This chain is Membrane-bound O-acyltransferase gup1 (gup1), found in Schizosaccharomyces pombe (strain 972 / ATCC 24843) (Fission yeast).